The primary structure comprises 277 residues: Glycerol-3-phosphate acyltransferase (277 aa).

5 consecutive transmembrane segments (helical) span residues 3-23 (LFIFLILVGYLMGSINSAIIV), 55-75 (IMVMVFDALKGILPVILAKFL), 79-99 (PVTVAFTALAAVVGHMYPVFF), 111-131 (IGALLAFHFIIGVMVAATWLL), and 155-175 (LILVGNLNIFPPLFMITILVL). The tract at residues 207–277 (SPATSAEQEF…PKTKTVKEKE (71 aa)) is disordered. A compositionally biased stretch (basic and acidic residues) spans 216-239 (FPGKEVIDTNIDETEKTEQAEAVK). 2 stretches are compositionally biased toward basic residues: residues 240–253 (KPKVKKATTKAKKT) and 262–271 (KPKSTKPKTK).

It belongs to the PlsY family. Probably interacts with PlsX.

The protein resides in the cell inner membrane. It carries out the reaction an acyl phosphate + sn-glycerol 3-phosphate = a 1-acyl-sn-glycero-3-phosphate + phosphate. It participates in lipid metabolism; phospholipid metabolism. Catalyzes the transfer of an acyl group from acyl-phosphate (acyl-PO(4)) to glycerol-3-phosphate (G3P) to form lysophosphatidic acid (LPA). This enzyme utilizes acyl-phosphate as fatty acyl donor, but not acyl-CoA or acyl-ACP. In Legionella pneumophila subsp. pneumophila (strain Philadelphia 1 / ATCC 33152 / DSM 7513), this protein is Glycerol-3-phosphate acyltransferase.